Reading from the N-terminus, the 646-residue chain is Pentatricopeptide repeat-containing protein At5g48910 (646 aa).

A disordered region spans residues 1–24 (MNPTQTLFSPGGNSPASSPASHPS). A compositionally biased stretch (low complexity) spans 9 to 24 (SPGGNSPASSPASHPS). PPR repeat units follow at residues 54–88 (DTLA…MPQR), 89–126 (NCFS…FVEP), 127–161 (NRFT…GFGG), 162–197 (DEFV…DMVV), 207–237 (EIVL…MRQR), 238–272 (SVVS…DIRP), 273–307 (NYVT…GIRI), 308–338 (DDVL…LPRE), 339–373 (NVIT…GVRP), 374–409 (SDVA…GLEP), and 410–440 (RIEH…MPIK). Residues 445-520 (IWKALLGACR…DPGCSLIDID (76 aa)) form a type E motif region. The tract at residues 521–551 (GVLHEFVVEDDSHPKAKEINSMLVEISDKLR) is type E(+) motif. The tract at residues 552-646 (LAGYRPITTQ…DGSCSCMDYW (95 aa)) is type DYW motif.

This sequence belongs to the PPR family. PCMP-H subfamily.

The chain is Pentatricopeptide repeat-containing protein At5g48910 (PCMP-H38) from Arabidopsis thaliana (Mouse-ear cress).